Here is a 2476-residue protein sequence, read N- to C-terminus: Non-reducing polyketide synthase ausA (2476 aa).

The interval 14–253 is N-terminal acylcarrier protein transacylase domain (SAT); sequence VLFGPKYPEV…HHSNHTQAVE (240 aa). Residues 379–795 enclose the Ketosynthase family 3 (KS3) domain; the sequence is AVPIAVTGMA…GSNAAIVLRE (417 aa). Catalysis depends on for beta-ketoacyl synthase activity residues cysteine 544, histidine 679, and histidine 718. The tract at residues 906-1210 is malonyl-CoA:ACP transacylase (MAT) domain; it reads ICFGGQTGDT…LPTDLSGAQA (305 aa). The active-site For acyl/malonyl transferase activity is serine 993. The segment at 1277-1405 is N-terminal hotdog fold; sequence QEASLVRLLR…GRVSLQAAGS (129 aa). The PKS/mFAS DH domain occupies 1277-1584; that stretch reads QEASLVRLLR…FTGVSIQSLK (308 aa). The tract at residues 1280–1583 is product template (PT) domain; sequence SLVRLLRQDG…TFTGVSIQSL (304 aa). Histidine 1310 serves as the catalytic Proton acceptor; for dehydratase activity. The C-terminal hotdog fold stretch occupies residues 1433-1584; the sequence is SSSGLKRSTV…FTGVSIQSLK (152 aa). Aspartate 1491 acts as the Proton donor; for dehydratase activity in catalysis. In terms of domain architecture, Carrier spans 1626–1700; sequence DGDLLAVQTM…GLVQRIFPGH (75 aa). Serine 1660 is modified (O-(pantetheine 4'-phosphoryl)serine). The segment at 1862-2095 is methyltransferase (CMeT) domain; the sequence is QHASEHKLLH…GFNWVDWTDN (234 aa). The tract at residues 2128-2476 is thioesterase (TE) domain; it reads NTVQEQTVLY…YEFLRRHVGL (349 aa). Active-site for thioesterase activity residues include serine 2251, aspartate 2413, and histidine 2445.

The enzyme catalyses 3 malonyl-CoA + acetyl-CoA + 2 S-adenosyl-L-methionine = 3,5-dimethylorsellinate + 2 S-adenosyl-L-homocysteine + 3 CO2 + 4 CoA. Its pathway is secondary metabolite biosynthesis; terpenoid biosynthesis. Non-reducing polyketide synthase; part of the gene cluster A that mediates the biosynthesis of austinol and dehydroaustinol, two fungal meroterpenoids. The first step of the pathway is the synthesis of 3,5-dimethylorsellinic acid by the polyketide synthase ausA. 3,5-dimethylorsellinic acid is then prenylated by the polyprenyl transferase ausN. Further epoxidation by the FAD-dependent monooxygenase ausM and cyclization by the probable terpene cyclase ausL lead to the formation of protoaustinoid A. Protoaustinoid A is then oxidized to spiro-lactone preaustinoid A3 by the combined action of the FAD-binding monooxygenases ausB and ausC, and the dioxygenase ausE. Acid-catalyzed keto-rearrangement and ring contraction of the tetraketide portion of preaustinoid A3 by ausJ lead to the formation of preaustinoid A4. The aldo-keto reductase ausK, with the help of ausH, is involved in the next step by transforming preaustinoid A4 into isoaustinone which is in turn hydroxylated by the P450 monooxygenase ausI to form austinolide. Finally, the cytochrome P450 monooxygenase ausG modifies austinolide to austinol. Austinol can be further modified to dehydroaustinol which forms a diffusible complex with diorcinol that initiates conidiation. Due to genetic rearrangements of the clusters and the subsequent loss of some enzymes, the end products of the Emericella nidulans austinoid biosynthesis clusters are austinol and dehydroaustinol, even if additional enzymes, such as the O-acetyltransferase ausQ and the cytochrome P450 monooxygenase ausR are still functional. This is Non-reducing polyketide synthase ausA from Emericella nidulans (strain FGSC A4 / ATCC 38163 / CBS 112.46 / NRRL 194 / M139) (Aspergillus nidulans).